A 248-amino-acid polypeptide reads, in one-letter code: tRNA (guanine-N(7)-)-methyltransferase (248 aa).

Glu80, Glu105, Asp132, and Asp155 together coordinate S-adenosyl-L-methionine. Residue Asp155 is part of the active site. Residues Lys159, Asp191, and 223-226 (TKFE) contribute to the substrate site.

This sequence belongs to the class I-like SAM-binding methyltransferase superfamily. TrmB family.

It catalyses the reaction guanosine(46) in tRNA + S-adenosyl-L-methionine = N(7)-methylguanosine(46) in tRNA + S-adenosyl-L-homocysteine. The protein operates within tRNA modification; N(7)-methylguanine-tRNA biosynthesis. Its function is as follows. Catalyzes the formation of N(7)-methylguanine at position 46 (m7G46) in tRNA. This is tRNA (guanine-N(7)-)-methyltransferase from Nocardioides sp. (strain ATCC BAA-499 / JS614).